A 437-amino-acid chain; its full sequence is Glutamate-1-semialdehyde 2,1-aminomutase (437 aa).

Lys274 is subject to N6-(pyridoxal phosphate)lysine.

It belongs to the class-III pyridoxal-phosphate-dependent aminotransferase family. HemL subfamily. In terms of assembly, homodimer. Requires pyridoxal 5'-phosphate as cofactor.

It localises to the cytoplasm. The enzyme catalyses (S)-4-amino-5-oxopentanoate = 5-aminolevulinate. The protein operates within porphyrin-containing compound metabolism; protoporphyrin-IX biosynthesis; 5-aminolevulinate from L-glutamyl-tRNA(Glu): step 2/2. This chain is Glutamate-1-semialdehyde 2,1-aminomutase, found in Leptothrix cholodnii (strain ATCC 51168 / LMG 8142 / SP-6) (Leptothrix discophora (strain SP-6)).